Reading from the N-terminus, the 429-residue chain is Formate-dependent phosphoribosylglycinamide formyltransferase (429 aa).

N(1)-(5-phospho-beta-D-ribosyl)glycinamide contacts are provided by residues 26–27 (EL) and E86. Residues R118, K159, 199 to 202 (EEHI), and E207 contribute to the ATP site. In terms of domain architecture, ATP-grasp spans 123-319 (ETLVKEAKVP…EFGLHLRAVL (197 aa)). Mg(2+) contacts are provided by E276 and E288. Residues D295, K375, and 382 to 383 (RR) contribute to the N(1)-(5-phospho-beta-D-ribosyl)glycinamide site.

It belongs to the PurK/PurT family. In terms of assembly, homodimer.

It catalyses the reaction N(1)-(5-phospho-beta-D-ribosyl)glycinamide + formate + ATP = N(2)-formyl-N(1)-(5-phospho-beta-D-ribosyl)glycinamide + ADP + phosphate + H(+). Its pathway is purine metabolism; IMP biosynthesis via de novo pathway; N(2)-formyl-N(1)-(5-phospho-D-ribosyl)glycinamide from N(1)-(5-phospho-D-ribosyl)glycinamide (formate route): step 1/1. Involved in the de novo purine biosynthesis. Catalyzes the transfer of formate to 5-phospho-ribosyl-glycinamide (GAR), producing 5-phospho-ribosyl-N-formylglycinamide (FGAR). Formate is provided by PurU via hydrolysis of 10-formyl-tetrahydrofolate. The chain is Formate-dependent phosphoribosylglycinamide formyltransferase from Pyrococcus furiosus (strain ATCC 43587 / DSM 3638 / JCM 8422 / Vc1).